The sequence spans 442 residues: tRNA modification GTPase MnmE (442 aa).

3 residues coordinate (6S)-5-formyl-5,6,7,8-tetrahydrofolate: Arg21, Glu79, and Lys118. Residues 214 to 367 (GFKIAIVGKP…LKEELQNYLN (154 aa)) form the TrmE-type G domain. K(+) is bound at residue Asn224. Residues 224–229 (NVGKSS), 243–249 (SDIAGTT), and 268–271 (DTAG) each bind GTP. A Mg(2+)-binding site is contributed by Ser228. Ser243, Ile245, and Thr248 together coordinate K(+). Thr249 is a Mg(2+) binding site. Lys442 provides a ligand contact to (6S)-5-formyl-5,6,7,8-tetrahydrofolate.

This sequence belongs to the TRAFAC class TrmE-Era-EngA-EngB-Septin-like GTPase superfamily. TrmE GTPase family. Homodimer. Heterotetramer of two MnmE and two MnmG subunits. Requires K(+) as cofactor.

Its subcellular location is the cytoplasm. Exhibits a very high intrinsic GTPase hydrolysis rate. Involved in the addition of a carboxymethylaminomethyl (cmnm) group at the wobble position (U34) of certain tRNAs, forming tRNA-cmnm(5)s(2)U34. This chain is tRNA modification GTPase MnmE, found in Campylobacter jejuni subsp. jejuni serotype O:2 (strain ATCC 700819 / NCTC 11168).